Here is a 205-residue protein sequence, read N- to C-terminus: Large ribosomal subunit protein uL4 (205 aa).

The interval 43–95 (RSGNRAQKDRAEVKHSTKKPWRQKGTGRARAGMTSSPLWRGGGRAFPNSPEEN) is disordered. Over residues 48 to 57 (AQKDRAEVKH) the composition is skewed to basic and acidic residues. Over residues 58-69 (STKKPWRQKGTG) the composition is skewed to basic residues.

It belongs to the universal ribosomal protein uL4 family. As to quaternary structure, part of the 50S ribosomal subunit.

One of the primary rRNA binding proteins, this protein initially binds near the 5'-end of the 23S rRNA. It is important during the early stages of 50S assembly. It makes multiple contacts with different domains of the 23S rRNA in the assembled 50S subunit and ribosome. In terms of biological role, forms part of the polypeptide exit tunnel. In Bordetella bronchiseptica (strain ATCC BAA-588 / NCTC 13252 / RB50) (Alcaligenes bronchisepticus), this protein is Large ribosomal subunit protein uL4.